A 293-amino-acid polypeptide reads, in one-letter code: Movement protein BC1 (293 aa).

It belongs to the begomovirus movement protein BC1 family. Binds to dimeric supercoiled plasmid DNA. Phosphorylated.

It is found in the host cell membrane. The protein localises to the host microsome membrane. The protein resides in the host endoplasmic reticulum membrane. Functionally, transports viral genome to neighboring plant cells directly through plasmosdesmata, without any budding. The movement protein allows efficient cell to cell propagation, by bypassing the host cell wall barrier. Begomovirus genome is shuttled out of nucleus by Nuclear shuttle protein (NSP) and the movement protein transports the DNA-NSP complex to cell plasmodesmata and facilitates further movement across the cell wall. This is Movement protein BC1 from Cucurbita moschata (Winter crookneck squash).